A 340-amino-acid polypeptide reads, in one-letter code: Putative D-lactate dehydrogenase (340 aa).

NAD(+) is bound by residues 153 to 154, Asp174, 206 to 207, 233 to 235, and Asp259; these read NI, TP, and VSR. Residue Arg235 is part of the active site. Glu264 is a catalytic residue. His296 (proton donor) is an active-site residue.

It belongs to the D-isomer specific 2-hydroxyacid dehydrogenase family.

The enzyme catalyses (R)-lactate + NAD(+) = pyruvate + NADH + H(+). The polypeptide is Putative D-lactate dehydrogenase (ldhA) (Dictyostelium discoideum (Social amoeba)).